A 243-amino-acid polypeptide reads, in one-letter code: Protein IN2-1 (243 aa).

Residues 1–26 are disordered; the sequence is MAAAAGPSSSVKESLPPALGSTSQPP. In terms of domain architecture, GST N-terminal spans 31–112; sequence GTTRLYICYF…YIDSNFDGPA (82 aa). Residues K70, V84, and 96-97 each bind glutathione; that span reads ES. One can recognise a GST C-terminal domain in the interval 109–240; the sequence is DGPALLPEDA…FLLDLAKSHL (132 aa).

This sequence belongs to the GST superfamily. HSP26 family. In terms of tissue distribution, leaves and roots. It is more strongly induced in the leaves relative to the roots.

The sequence is that of Protein IN2-1 (IN2-1) from Zea mays (Maize).